Consider the following 615-residue polypeptide: Dihydroxy-acid dehydratase (615 aa).

Aspartate 81 contributes to the Mg(2+) binding site. Cysteine 122 lines the [2Fe-2S] cluster pocket. Residues aspartate 123 and lysine 124 each contribute to the Mg(2+) site. Residue lysine 124 is modified to N6-carboxylysine. Cysteine 193 serves as a coordination point for [2Fe-2S] cluster. Glutamate 489 is a binding site for Mg(2+). The active-site Proton acceptor is the serine 515.

This sequence belongs to the IlvD/Edd family. As to quaternary structure, homodimer. The cofactor is [2Fe-2S] cluster. It depends on Mg(2+) as a cofactor.

It catalyses the reaction (2R)-2,3-dihydroxy-3-methylbutanoate = 3-methyl-2-oxobutanoate + H2O. The enzyme catalyses (2R,3R)-2,3-dihydroxy-3-methylpentanoate = (S)-3-methyl-2-oxopentanoate + H2O. The protein operates within amino-acid biosynthesis; L-isoleucine biosynthesis; L-isoleucine from 2-oxobutanoate: step 3/4. Its pathway is amino-acid biosynthesis; L-valine biosynthesis; L-valine from pyruvate: step 3/4. Its function is as follows. Functions in the biosynthesis of branched-chain amino acids. Catalyzes the dehydration of (2R,3R)-2,3-dihydroxy-3-methylpentanoate (2,3-dihydroxy-3-methylvalerate) into 2-oxo-3-methylpentanoate (2-oxo-3-methylvalerate) and of (2R)-2,3-dihydroxy-3-methylbutanoate (2,3-dihydroxyisovalerate) into 2-oxo-3-methylbutanoate (2-oxoisovalerate), the penultimate precursor to L-isoleucine and L-valine, respectively. This is Dihydroxy-acid dehydratase from Pseudomonas syringae pv. syringae (strain B728a).